A 246-amino-acid polypeptide reads, in one-letter code: Triosephosphate isomerase (246 aa).

9–11 (NWK) is a binding site for substrate. H99 functions as the Electrophile in the catalytic mechanism. Catalysis depends on E168, which acts as the Proton acceptor. Substrate-binding positions include G174, S207, and 228–229 (GG).

It belongs to the triosephosphate isomerase family. In terms of assembly, homodimer.

The protein localises to the cytoplasm. The catalysed reaction is D-glyceraldehyde 3-phosphate = dihydroxyacetone phosphate. It functions in the pathway carbohydrate biosynthesis; gluconeogenesis. It participates in carbohydrate degradation; glycolysis; D-glyceraldehyde 3-phosphate from glycerone phosphate: step 1/1. Its function is as follows. Involved in the gluconeogenesis. Catalyzes stereospecifically the conversion of dihydroxyacetone phosphate (DHAP) to D-glyceraldehyde-3-phosphate (G3P). This chain is Triosephosphate isomerase, found in Prochlorococcus marinus (strain NATL1A).